Consider the following 197-residue polypeptide: Cold-regulated 413 plasma membrane protein 1 (197 aa).

The Extracellular portion of the chain corresponds to 1-40 (MPMKSLRNDHGTLKAMIGSDFNELTIAAKNLATHAFTLTG). The chain crosses the membrane as a helical span at residues 41 to 61 (LGFGTSVLEWVASIAAIYLLV). The Cytoplasmic segment spans residues 62–71 (LDRTNWKTNM). Residues 72–92 (LTSLLIPYIFFSLPSLIFGIF) traverse the membrane as a helical segment. Topologically, residues 93 to 94 (RG) are extracellular. Residues 95-115 (EIGKWIAFVAVVVQLFFPKHA) traverse the membrane as a helical segment. Residues 116 to 117 (RE) lie on the Cytoplasmic side of the membrane. The chain crosses the membrane as a helical span at residues 118-138 (YLELPVALVLLAVVAPNLIAG). Residues 139–141 (TFR) lie on the Extracellular side of the membrane. The chain crosses the membrane as a helical span at residues 142-162 (DSWIGLAICLGIGCYLLQEHI). Over 163 to 176 (RASGGFRNAFTKAN) the chain is Cytoplasmic. A helical membrane pass occupies residues 177–197 (GISNTVGIICLVVFPVWALIF).

The protein belongs to the Cold-regulated 413 protein family.

The protein resides in the membrane. The chain is Cold-regulated 413 plasma membrane protein 1 (COR413PM1) from Arabidopsis thaliana (Mouse-ear cress).